A 331-amino-acid polypeptide reads, in one-letter code: 6-phosphogluconolactonase (331 aa).

Position 287 is an N6-acetyllysine (lysine 287).

The protein belongs to the cycloisomerase 2 family.

The catalysed reaction is 6-phospho-D-glucono-1,5-lactone + H2O = 6-phospho-D-gluconate + H(+). It functions in the pathway carbohydrate degradation; pentose phosphate pathway; D-ribulose 5-phosphate from D-glucose 6-phosphate (oxidative stage): step 2/3. Its function is as follows. Catalyzes the hydrolysis of 6-phosphogluconolactone to 6-phosphogluconate. This chain is 6-phosphogluconolactonase, found in Escherichia coli O7:K1 (strain IAI39 / ExPEC).